Reading from the N-terminus, the 71-residue chain is Cruzioseptin-2 (71 aa).

A signal peptide spans 1–22 (MAFLKKSLFLVLFLGLVSLSIC). Residues 23–43 (EEEKREEENEEVQEDDDQSEE) constitute a propeptide that is removed on maturation. Residue Q68 is modified to Glutamine amide. Residues 70–71 (EQ) constitute a propeptide that is removed on maturation.

In terms of tissue distribution, expressed by the skin glands.

It is found in the secreted. Functionally, has antimicrobial activity against Gram-negative bacterium E.coli (MIC=26.35 uM), against Gram-positive bacterium S.aureus (MIC=6.59 uM) and against fungus C.albicans (MIC=13.18 uM). At higher concentrations also has a bactericidal and fungicidal effect. Has hemagglutinating activity against horse erythrocytes. This chain is Cruzioseptin-2, found in Cruziohyla calcarifer (Splendid leaf frog).